A 143-amino-acid polypeptide reads, in one-letter code: Transcriptional regulator MraZ (143 aa).

SpoVT-AbrB domains follow at residues 5–47 (TFTP…PRNV) and 76–119 (ADEQ…NAES).

Belongs to the MraZ family. In terms of assembly, forms oligomers.

It is found in the cytoplasm. The protein resides in the nucleoid. This chain is Transcriptional regulator MraZ, found in Corynebacterium kroppenstedtii (strain DSM 44385 / JCM 11950 / CIP 105744 / CCUG 35717).